A 689-amino-acid polypeptide reads, in one-letter code: Glycine--tRNA ligase beta subunit (689 aa).

Belongs to the class-II aminoacyl-tRNA synthetase family. Tetramer of two alpha and two beta subunits.

The protein localises to the cytoplasm. The enzyme catalyses tRNA(Gly) + glycine + ATP = glycyl-tRNA(Gly) + AMP + diphosphate. This chain is Glycine--tRNA ligase beta subunit, found in Shewanella putrefaciens (strain CN-32 / ATCC BAA-453).